A 25-amino-acid chain; its full sequence is Small ribosomal subunit protein eS32 (25 aa).

Residues 1 to 25 (MRAKWRKKRVRRLKRKRRKVRARSK) form a disordered region.

It belongs to the eukaryotic ribosomal protein eS32 family. Component of the small ribosomal subunit.

The chain is Small ribosomal subunit protein eS32 (RPL41) from Eremothecium gossypii (strain ATCC 10895 / CBS 109.51 / FGSC 9923 / NRRL Y-1056) (Yeast).